The chain runs to 130 residues: Large ribosomal subunit protein bL12 (130 aa).

Belongs to the bacterial ribosomal protein bL12 family. Homodimer. Part of the ribosomal stalk of the 50S ribosomal subunit. Forms a multimeric L10(L12)X complex, where L10 forms an elongated spine to which 2 to 4 L12 dimers bind in a sequential fashion. Binds GTP-bound translation factors.

Forms part of the ribosomal stalk which helps the ribosome interact with GTP-bound translation factors. Is thus essential for accurate translation. The protein is Large ribosomal subunit protein bL12 of Prochlorococcus marinus (strain SARG / CCMP1375 / SS120).